Reading from the N-terminus, the 436-residue chain is GTPase Der (436 aa).

2 EngA-type G domains span residues 4–167 and 175–351; these read PTVA…PTEV and IRFS…ESQN. GTP contacts are provided by residues 10 to 17, 57 to 61, 119 to 122, 181 to 188, 229 to 233, and 294 to 297; these read GRPNVGKS, DTGGI, NKVD, DTAGM, and NKWD. Residues 352 to 436 form the KH-like domain; that stretch reads RRISSAVLND…PIHLIARKRK (85 aa).

Belongs to the TRAFAC class TrmE-Era-EngA-EngB-Septin-like GTPase superfamily. EngA (Der) GTPase family. As to quaternary structure, associates with the 50S ribosomal subunit.

In terms of biological role, GTPase that plays an essential role in the late steps of ribosome biogenesis. The protein is GTPase Der of Streptococcus thermophilus (strain CNRZ 1066).